Consider the following 519-residue polypeptide: MEEAKKDDSLSNVAEYSVSEISHALKRTIEDTFGHVRVRGEISGFRGAHSSGHCYFSLKDERARMEAVIWKTTFARLRFPPQEGLEVIATGRLTTFPGSSKYQIVIESLEPAGAGALMALLEERKRKLAAEGLFAESRKRPLPFMPHVIGVVTSPTGAVIRDIIHRITDRFPVHVVVWPVRVQGETTGAEVAAAISGFNALQPGGTIPRPDILIVARGGGSLEDLWGFNDEAVVRAAAASAIPLISAVGHETDWTLIDLAADRRAPTPTGAAEVAVPVKAELEANIARLSARLKGAISRCLDRRRQETRSLARALPSPDQLFALPRRRFDEAAGRLGRALQTSTQGKRLHLNAVRVSIATLDRRIAQARRDANQCGERLPLVYQGLVRHRRARFDRDAARVSPRVTLQRITTLGERLKIAIARKDRAVSLRVERARTVYEQAVRLAESLSYKSVLERGFALVRDGEDRPLKRASDVKPGETLRLQFADGNIGAISTGKSSNTNRKSAPAREPGKQGSLF.

Positions 493 to 519 (AISTGKSSNTNRKSAPAREPGKQGSLF) are disordered. Residues 496-505 (TGKSSNTNRK) show a composition bias toward polar residues.

The protein belongs to the XseA family. As to quaternary structure, heterooligomer composed of large and small subunits.

The protein localises to the cytoplasm. It carries out the reaction Exonucleolytic cleavage in either 5'- to 3'- or 3'- to 5'-direction to yield nucleoside 5'-phosphates.. Its function is as follows. Bidirectionally degrades single-stranded DNA into large acid-insoluble oligonucleotides, which are then degraded further into small acid-soluble oligonucleotides. The polypeptide is Exodeoxyribonuclease 7 large subunit (Chelativorans sp. (strain BNC1)).